We begin with the raw amino-acid sequence, 312 residues long: Ribosomal RNA small subunit methyltransferase H (312 aa).

S-adenosyl-L-methionine contacts are provided by residues 35–37, D55, F79, D100, and Q107; that span reads GGH. A disordered region spans residues 279–312; sequence LVGKSQRPGPGEVAANPRSRSAVMRVAERTGGAA.

It belongs to the methyltransferase superfamily. RsmH family.

It is found in the cytoplasm. It catalyses the reaction cytidine(1402) in 16S rRNA + S-adenosyl-L-methionine = N(4)-methylcytidine(1402) in 16S rRNA + S-adenosyl-L-homocysteine + H(+). In terms of biological role, specifically methylates the N4 position of cytidine in position 1402 (C1402) of 16S rRNA. The protein is Ribosomal RNA small subunit methyltransferase H of Aromatoleum aromaticum (strain DSM 19018 / LMG 30748 / EbN1) (Azoarcus sp. (strain EbN1)).